Consider the following 376-residue polypeptide: 3-dehydroquinate synthase (376 aa).

NAD(+) is bound by residues 115-119 (GVIGD), 139-140 (TS), Lys152, and Lys161. Zn(2+) is bound by residues Glu194, His256, and His275.

This sequence belongs to the sugar phosphate cyclases superfamily. Dehydroquinate synthase family. Requires Co(2+) as cofactor. It depends on Zn(2+) as a cofactor. The cofactor is NAD(+).

It is found in the cytoplasm. The enzyme catalyses 7-phospho-2-dehydro-3-deoxy-D-arabino-heptonate = 3-dehydroquinate + phosphate. Its pathway is metabolic intermediate biosynthesis; chorismate biosynthesis; chorismate from D-erythrose 4-phosphate and phosphoenolpyruvate: step 2/7. In terms of biological role, catalyzes the conversion of 3-deoxy-D-arabino-heptulosonate 7-phosphate (DAHP) to dehydroquinate (DHQ). The polypeptide is 3-dehydroquinate synthase (Rhizobium etli (strain CIAT 652)).